Here is a 128-residue protein sequence, read N- to C-terminus: Sirohydrochlorin cobaltochelatase (128 aa).

Residue histidine 9 is the Proton acceptor of the active site. Histidine 9 is a Co(2+) binding site. Residues lysine 43 and 68-73 contribute to the substrate site; that span reads FATGTH. Residue histidine 73 coordinates Co(2+).

The protein belongs to the CbiX family. CbiXS subfamily. Homotetramer; dimer of dimers.

It catalyses the reaction Co-sirohydrochlorin + 2 H(+) = sirohydrochlorin + Co(2+). The protein operates within cofactor biosynthesis; adenosylcobalamin biosynthesis; cob(II)yrinate a,c-diamide from sirohydrochlorin (anaerobic route): step 1/10. Functionally, catalyzes the insertion of Co(2+) into sirohydrochlorin as part of the anaerobic pathway to cobalamin biosynthesis. The protein is Sirohydrochlorin cobaltochelatase of Saccharolobus solfataricus (strain ATCC 35092 / DSM 1617 / JCM 11322 / P2) (Sulfolobus solfataricus).